The primary structure comprises 429 residues: 26S proteasome regulatory subunit RPN7 (429 aa).

Ser-8 and Ser-77 each carry phosphoserine. Residues 131 to 164 (AQAWINLGEYYAQIGDKDNAEKTLGKSLSKAIST) form a TPR repeat. Residues 223-395 (NFKEAAKLLV…GIVETNRPDN (173 aa)) form the PCI domain.

As to quaternary structure, the 26S proteasome is composed of a core protease, known as the 20S proteasome, capped at one or both ends by the 19S regulatory complex (RC). The RC is composed of at least 18 different subunits in two subcomplexes, the base and the lid, which form the portions proximal and distal to the 20S proteolytic core, respectively. Component of the lid subcomplex of the 19S RC.

It localises to the nucleus. Component of the 19S cap proteasome complex which acts as a regulatory subunit of the 26S proteasome, involved in the ATP-dependent degradation of ubiquitinated proteins. The protein is 26S proteasome regulatory subunit RPN7 of Saccharomyces cerevisiae (strain ATCC 204508 / S288c) (Baker's yeast).